A 447-amino-acid chain; its full sequence is Alpha-1,6-mannosyl-glycoprotein 2-beta-N-acetylglucosaminyltransferase (447 aa).

Over 1–9 (MRFRIYKRK) the chain is Cytoplasmic. Residues 10-29 (VLILTLVVAACGFVLWSSNG) traverse the membrane as a helical; Signal-anchor for type II membrane protein segment. Topologically, residues 30–447 (RQRKNEALAP…ELCKSYRRLQ (418 aa)) are lumenal. N-linked (GlcNAc...) asparagine glycans are attached at residues Asn-69 and Asn-86. Substrate-binding positions include 123–127 (QVHNR) and Asp-154. Cys-196 and Cys-210 are oxidised to a cystine. Position 229–233 (229–233 (QTKHH)) interacts with substrate. Asp-261 is a Mn(2+) binding site. A disulfide bridge connects residues Cys-283 and Cys-286. Arg-298 provides a ligand contact to substrate. Cystine bridges form between Cys-334–Cys-357, Cys-339–Cys-440, and Cys-378–Cys-386. Residue His-374 participates in Mn(2+) binding.

It belongs to the glycosyltransferase 16 (GT16) protein family. Homodimer. Requires Mn(2+) as cofactor.

The protein localises to the golgi apparatus membrane. The enzyme catalyses an N(4)-{beta-D-GlcNAc-(1-&gt;2)-alpha-D-Man-(1-&gt;3)-[alpha-D-Man-(1-&gt;6)]-beta-D-Man-(1-&gt;4)-beta-D-GlcNAc-(1-&gt;4)-beta-D-GlcNAc}-L-asparaginyl-[protein] + UDP-N-acetyl-alpha-D-glucosamine = N(4)-{beta-D-GlcNAc-(1-&gt;2)-alpha-D-Man-(1-&gt;3)-[beta-D-GlcNAc-(1-&gt;2)-alpha-D-Man-(1-&gt;6)]-beta-D-Man-(1-&gt;4)-beta-D-GlcNAc-(1-&gt;4)-beta-D-GlcNAc}-L-asparaginyl-[protein] + UDP + H(+). It participates in protein modification; protein glycosylation. Its function is as follows. Plays an essential role in protein N-glycosylation. Catalyzes the transfer of N-acetylglucosamine (GlcNAc) onto the free terminal mannose moiety in the core structure of the nascent N-linked glycan chain, giving rise to the second branch in complex glycans. In Homo sapiens (Human), this protein is Alpha-1,6-mannosyl-glycoprotein 2-beta-N-acetylglucosaminyltransferase (MGAT2).